Consider the following 644-residue polypeptide: MAKIIGIDLGTTNSCVAVMEGDKPKVIENSEGHRTTPSIVAFTDDNEILVGQSAKRQSVTNPEKTLFAIKRLIGRRFDDPIVQKDIKMVPYKIMKADNGDAWVRVKDQDKAPPQISAEVLRKMKKTAEDYLGEEVKEAVITVPAYFNDSQRQATKDAGRIAGLEVKRIINEPTAAALAYGMDKKRGDSVIAVYDLGGGTFDISIIEIAEVDGEHQFEVLATNGDTFLGGEDFDLALIEYLASEFKKDTGIDLHNDPLALQRLKEAAEKAKIELSSAQQTDVNLPYITADASGPKHLNIKLTRAKLESLVEKLVERTIEPCKTALKDAGLTVSQINEVILVGGQTRMPLVQKTVEEFFGKEPRKDVNPDEAVAVGAAIQAAVLSGEVKDILLLDVTPLSLGIETMGGVMTKLIEKNTTIPTKATQVFSTADDNQTAVTVHVLQGEREQASANKSLGRFDLRDIPPAPRGVPQIEVTFDIDANGILNVSAKDKATGKAQSIVIKASSGLSEEEVAAMVKDAQSHAEEDKKFKEMAELRNQADSLIHSCEKSMKDLADELSEDEKKGIETAISELKEAVQGTDKARIEDKLKVLTDASAKMAERIYAKKSSEGQTAQGQTQSQESTKPAEEGVVDAEFEEVKEEDKK.

Thr199 is modified (phosphothreonine; by autocatalysis). Positions 602 to 644 (IYAKKSSEGQTAQGQTQSQESTKPAEEGVVDAEFEEVKEEDKK) are disordered. A compositionally biased stretch (polar residues) spans 609-623 (EGQTAQGQTQSQEST). Over residues 629-644 (GVVDAEFEEVKEEDKK) the composition is skewed to acidic residues.

The protein belongs to the heat shock protein 70 family.

Functionally, acts as a chaperone. In Legionella pneumophila (strain Lens), this protein is Chaperone protein DnaK.